We begin with the raw amino-acid sequence, 284 residues long: 4-diphosphocytidyl-2-C-methyl-D-erythritol kinase (284 aa).

Lys-9 is a catalytic residue. Residue 90–100 (PLVSGLGGDSS) coordinates ATP. Residue Asp-132 is part of the active site.

Belongs to the GHMP kinase family. IspE subfamily.

It carries out the reaction 4-CDP-2-C-methyl-D-erythritol + ATP = 4-CDP-2-C-methyl-D-erythritol 2-phosphate + ADP + H(+). The protein operates within isoprenoid biosynthesis; isopentenyl diphosphate biosynthesis via DXP pathway; isopentenyl diphosphate from 1-deoxy-D-xylulose 5-phosphate: step 3/6. Its function is as follows. Catalyzes the phosphorylation of the position 2 hydroxy group of 4-diphosphocytidyl-2C-methyl-D-erythritol. This Dehalococcoides mccartyi (strain ATCC BAA-2100 / JCM 16839 / KCTC 5957 / BAV1) protein is 4-diphosphocytidyl-2-C-methyl-D-erythritol kinase.